The chain runs to 397 residues: Phosphoglycerate kinase (397 aa).

Residues 21–23, R37, 60–63, R119, and R152 each bind substrate; these read DFN and HLGR. ATP is bound by residues K202, G294, E325, and 351 to 354; that span reads GGDS.

It belongs to the phosphoglycerate kinase family. Monomer.

It is found in the cytoplasm. It carries out the reaction (2R)-3-phosphoglycerate + ATP = (2R)-3-phospho-glyceroyl phosphate + ADP. The protein operates within carbohydrate degradation; glycolysis; pyruvate from D-glyceraldehyde 3-phosphate: step 2/5. The sequence is that of Phosphoglycerate kinase from Pseudothermotoga lettingae (strain ATCC BAA-301 / DSM 14385 / NBRC 107922 / TMO) (Thermotoga lettingae).